We begin with the raw amino-acid sequence, 303 residues long: Pseudouridine-5'-phosphate glycosidase (303 aa).

The active-site Proton donor is Glu-24. 2 residues coordinate substrate: Lys-85 and Val-105. Asp-137 is a binding site for Mn(2+). Substrate is bound at residue 139 to 141; the sequence is SAD. Residue Lys-158 is the Nucleophile of the active site.

It belongs to the pseudouridine-5'-phosphate glycosidase family. Homotrimer. Requires Mn(2+) as cofactor.

It carries out the reaction D-ribose 5-phosphate + uracil = psi-UMP + H2O. Functionally, catalyzes the reversible cleavage of pseudouridine 5'-phosphate (PsiMP) to ribose 5-phosphate and uracil. Functions biologically in the cleavage direction, as part of a pseudouridine degradation pathway. The chain is Pseudouridine-5'-phosphate glycosidase from Herpetosiphon aurantiacus (strain ATCC 23779 / DSM 785 / 114-95).